The primary structure comprises 188 residues: UPF0301 protein Smal_0940 (188 aa).

The protein belongs to the UPF0301 (AlgH) family.

This chain is UPF0301 protein Smal_0940, found in Stenotrophomonas maltophilia (strain R551-3).